We begin with the raw amino-acid sequence, 265 residues long: Chorismate mutase 2 (265 aa).

The region spanning 10 to 265 (GSGCSNVLSL…EVEYLLRRLD (256 aa)) is the Chorismate mutase domain.

As to quaternary structure, homodimer. As to expression, expressed in roots, stems, cauline leaves and flowers, and at lower levels in rosette leaves and siliques.

It is found in the cytoplasm. The protein resides in the cytosol. It carries out the reaction chorismate = prephenate. The protein operates within metabolic intermediate biosynthesis; prephenate biosynthesis; prephenate from chorismate: step 1/1. With respect to regulation, no allosteric regulation. The sequence is that of Chorismate mutase 2 from Arabidopsis thaliana (Mouse-ear cress).